A 247-amino-acid polypeptide reads, in one-letter code: Small ribosomal subunit protein uS2 (247 aa).

This sequence belongs to the universal ribosomal protein uS2 family.

The chain is Small ribosomal subunit protein uS2 from Pseudomonas syringae pv. syringae (strain B728a).